The following is a 203-amino-acid chain: 8-oxoguanine DNA glycosylase/AP lyase (203 aa).

Residues Lys128 and Asp146 contribute to the active site.

It belongs to the type-2 OGG1 family.

The enzyme catalyses 2'-deoxyribonucleotide-(2'-deoxyribose 5'-phosphate)-2'-deoxyribonucleotide-DNA = a 3'-end 2'-deoxyribonucleotide-(2,3-dehydro-2,3-deoxyribose 5'-phosphate)-DNA + a 5'-end 5'-phospho-2'-deoxyribonucleoside-DNA + H(+). Catalyzes the excision of an oxidatively damaged form of guanine (7,8-dihydro-8-oxoguanine = 8-oxoG) from DNA. Also cleaves the DNA backbone at apurinic/apyrimidinic sites (AP sites). This chain is 8-oxoguanine DNA glycosylase/AP lyase, found in Sulfolobus acidocaldarius (strain ATCC 33909 / DSM 639 / JCM 8929 / NBRC 15157 / NCIMB 11770).